Reading from the N-terminus, the 946-residue chain is Protein RRC1 (946 aa).

2 disordered regions span residues 1–29 and 41–183; these read MSSFSITRKKTPFQKHREEEEARKKKAED and SFQG…NLYV. Composition is skewed to basic and acidic residues over residues 15-29, 62-75, and 98-147; these read KHREEEEARKKKAED, DKPKVDSEGEKSKD, and KGKE…DRQG. The 82-residue stretch at 179–260 folds into the RRM domain; it reads TNLYVGNLSP…YELKIGWGKA (82 aa). One copy of the SURP motif repeat lies at 329–372; the sequence is VIDTLALYVLDGECAFEQAIMERGRGNPLFKFMFELGSKEHTYY. Positions 437 to 582 constitute a CID domain; that stretch reads LTDPQRDEFE…GLRSTFLRSG (146 aa). The SAP domain maps to 631–665; sequence LMNLPIAELERRCRHNGLSLVGGRVMMVTRLLSLE. Disordered stretches follow at residues 740 to 797 and 836 to 946; these read ASKW…EQRQ and EVDY…RGTR. A compositionally biased stretch (polar residues) spans 757–767; sequence SSSSGSDNTGG. Basic and acidic residues-rich tracts occupy residues 772 to 781, 854 to 868, and 886 to 946; these read ADGEDLKGND, IIERKEKREDSQESS, and STRE…RGTR.

As to quaternary structure, component of the SWAP1-SFPS-RRC1 splicing factor complex which modulates pre-mRNA splicing to promote photomorphogenesis. Interacts with SWAP1 in a light-independent manner. As to expression, expressed in leaves, inflorescence stems, roots, flower buds, open flowers and siliques.

The protein localises to the nucleus speckle. Functionally, as a member of the SWAP1-SFPS-RRC1 splicing factor complex, modulates photomorphogenesis by regulating the gene expression and pre-messenger RNA (mRNA) alternative splicing of a large number of genes, including those involved in plant responses to light signaling. SR-like splicing factor required for phytochrome B (phyB) signal transduction and involved in phyB-dependent alternative splicing. The sequence is that of Protein RRC1 from Arabidopsis thaliana (Mouse-ear cress).